The primary structure comprises 514 residues: HERV-H LTR-associating protein 1 homolog (514 aa).

Positions 1-29 (MQSFLLHCPPIRLCMGLACILFLWNAVSG) are cleaved as a signal peptide. 9 N-linked (GlcNAc...) asparagine glycosylation sites follow: asparagine 58, asparagine 97, asparagine 139, asparagine 161, asparagine 179, asparagine 200, asparagine 217, asparagine 232, and asparagine 321. Residues 379 to 420 (LHPTGILTTPSRLAQPSRASGTLMPGTQTTNPTQAPAPRVPQ) form a disordered region. Over residues 384–398 (ILTTPSRLAQPSRAS) the composition is skewed to polar residues. Residues 403–415 (PGTQTTNPTQAPA) show a composition bias toward low complexity.

The protein resides in the secreted. This is HERV-H LTR-associating protein 1 homolog (Hhla1) from Mus musculus (Mouse).